The following is a 196-amino-acid chain: Probable nicotinate-nucleotide adenylyltransferase (196 aa).

The protein belongs to the NadD family.

It carries out the reaction nicotinate beta-D-ribonucleotide + ATP + H(+) = deamido-NAD(+) + diphosphate. It participates in cofactor biosynthesis; NAD(+) biosynthesis; deamido-NAD(+) from nicotinate D-ribonucleotide: step 1/1. Catalyzes the reversible adenylation of nicotinate mononucleotide (NaMN) to nicotinic acid adenine dinucleotide (NaAD). The protein is Probable nicotinate-nucleotide adenylyltransferase of Thermotoga sp. (strain RQ2).